Consider the following 95-residue polypeptide: Large ribosomal subunit protein uL23 (95 aa).

This sequence belongs to the universal ribosomal protein uL23 family. In terms of assembly, part of the 50S ribosomal subunit. Contacts protein L29, and trigger factor when it is bound to the ribosome.

Functionally, one of the early assembly proteins it binds 23S rRNA. One of the proteins that surrounds the polypeptide exit tunnel on the outside of the ribosome. Forms the main docking site for trigger factor binding to the ribosome. This Levilactobacillus brevis (strain ATCC 367 / BCRC 12310 / CIP 105137 / JCM 1170 / LMG 11437 / NCIMB 947 / NCTC 947) (Lactobacillus brevis) protein is Large ribosomal subunit protein uL23.